A 545-amino-acid chain; its full sequence is Glucose-6-phosphate isomerase (545 aa).

The active-site Proton donor is E349. Active-site residues include H380 and K509.

It belongs to the GPI family.

The protein resides in the cytoplasm. It catalyses the reaction alpha-D-glucose 6-phosphate = beta-D-fructose 6-phosphate. It participates in carbohydrate biosynthesis; gluconeogenesis. It functions in the pathway carbohydrate degradation; glycolysis; D-glyceraldehyde 3-phosphate and glycerone phosphate from D-glucose: step 2/4. In terms of biological role, catalyzes the reversible isomerization of glucose-6-phosphate to fructose-6-phosphate. This Chelativorans sp. (strain BNC1) protein is Glucose-6-phosphate isomerase.